Here is a 256-residue protein sequence, read N- to C-terminus: H-2 class II histocompatibility antigen, A-K alpha chain (256 aa).

Positions 1 to 23 are cleaved as a signal peptide; it reads MPRSRALILGVLALTTMLSLCGG. The tract at residues 24–111 is alpha-1; it reads EDDIEADHVG…KRSNSTPATN (88 aa). Residues 24-218 lie on the Extracellular side of the membrane; that stretch reads EDDIEADHVG…IPAPMSELTE (195 aa). N-linked (GlcNAc...) asparagine glycans are attached at residues Asn-105 and Asn-145. The segment at 112–205 is alpha-2; that stretch reads EAPQATVFPK…GLEEPVLKHW (94 aa). The Ig-like C1-type domain occupies 114–206; the sequence is PQATVFPKSP…LEEPVLKHWE (93 aa). Residues Cys-134 and Cys-190 are joined by a disulfide bond. The interval 206 to 218 is connecting peptide; it reads EPEIPAPMSELTE. Residues 219–241 traverse the membrane as a helical segment; sequence TVVCALGLSVGLVGIVVGTIFII. At 242–256 the chain is on the cytoplasmic side; that stretch reads QGLRSGGTSRHPGPL.

It belongs to the MHC class II family.

The protein resides in the membrane. The polypeptide is H-2 class II histocompatibility antigen, A-K alpha chain (H2-Aa) (Mus musculus (Mouse)).